A 60-amino-acid chain; its full sequence is Acidic phospholipase A2 (60 aa).

Positions 27, 29, and 31 each coordinate Ca(2+). C28 and C44 are oxidised to a cystine. The active site involves H47. D48 provides a ligand contact to Ca(2+).

This sequence belongs to the phospholipase A2 family. Group II subfamily. D49 sub-subfamily. In terms of assembly, monomer. Ca(2+) serves as cofactor. Expressed by the venom gland.

The protein resides in the secreted. It carries out the reaction a 1,2-diacyl-sn-glycero-3-phosphocholine + H2O = a 1-acyl-sn-glycero-3-phosphocholine + a fatty acid + H(+). In terms of biological role, snake venom phospholipase A2 (PLA2) that exhibits an indirect hemolytic activity, a low myotoxicity, and induces edema. In addition, this enzyme has been shown to induce the release of some pro- and anti-inflammatory cytokines from human PBMC (IL12B, TNF-alpha, IL1B and IL6 but not variation has been observed for IL-8 and IL-10). PLA2 catalyzes the calcium-dependent hydrolysis of the 2-acyl groups in 3-sn-phosphoglycerides. This Bothrops leucurus (Whitetail lancehead) protein is Acidic phospholipase A2.